A 350-amino-acid polypeptide reads, in one-letter code: Glycerol-1-phosphate dehydrogenase [NAD(P)+] (350 aa).

NAD(+) contacts are provided by residues 96–100 (GNIID) and 118–121 (TAPS). Asp123 serves as a coordination point for substrate. Position 127 (Ser127) interacts with NAD(+). Asp170 contributes to the substrate binding site. Zn(2+)-binding residues include Asp170 and His250. Residue His254 coordinates substrate. Residue His266 coordinates Zn(2+).

It belongs to the glycerol-1-phosphate dehydrogenase family. Homodimer. Zn(2+) serves as cofactor.

The protein localises to the cytoplasm. It catalyses the reaction sn-glycerol 1-phosphate + NAD(+) = dihydroxyacetone phosphate + NADH + H(+). The enzyme catalyses sn-glycerol 1-phosphate + NADP(+) = dihydroxyacetone phosphate + NADPH + H(+). Its pathway is membrane lipid metabolism; glycerophospholipid metabolism. In terms of biological role, catalyzes the NAD(P)H-dependent reduction of dihydroxyacetonephosphate (DHAP or glycerone phosphate) to glycerol 1-phosphate (G1P). The G1P thus generated is used as the glycerophosphate backbone of phospholipids in the cellular membranes of Archaea. The polypeptide is Glycerol-1-phosphate dehydrogenase [NAD(P)+] (Sulfurisphaera tokodaii (strain DSM 16993 / JCM 10545 / NBRC 100140 / 7) (Sulfolobus tokodaii)).